The following is an 800-amino-acid chain: DNA topoisomerase 4 subunit A (800 aa).

The 466-residue stretch at 31-496 (LPDVRDGLKP…ISEIKIDKEV (466 aa)) folds into the Topo IIA-type catalytic domain. Tyr119 acts as the O-(5'-phospho-DNA)-tyrosine intermediate in catalysis.

The protein belongs to the type II topoisomerase GyrA/ParC subunit family. ParC type 2 subfamily. In terms of assembly, heterotetramer composed of ParC and ParE.

Its subcellular location is the cell membrane. The catalysed reaction is ATP-dependent breakage, passage and rejoining of double-stranded DNA.. In terms of biological role, topoisomerase IV is essential for chromosome segregation. It relaxes supercoiled DNA. Performs the decatenation events required during the replication of a circular DNA molecule. The polypeptide is DNA topoisomerase 4 subunit A (Staphylococcus epidermidis (strain ATCC 12228 / FDA PCI 1200)).